The chain runs to 138 residues: Putative pre-16S rRNA nuclease (138 aa).

It belongs to the YqgF nuclease family.

It localises to the cytoplasm. Its function is as follows. Could be a nuclease involved in processing of the 5'-end of pre-16S rRNA. The polypeptide is Putative pre-16S rRNA nuclease (Geobacillus kaustophilus (strain HTA426)).